Reading from the N-terminus, the 154-residue chain is 6,7-dimethyl-8-ribityllumazine synthase (154 aa).

5-amino-6-(D-ribitylamino)uracil is bound by residues phenylalanine 22, 56–58 (AFE), and 80–82 (AVI). A (2S)-2-hydroxy-3-oxobutyl phosphate-binding site is contributed by 85–86 (ET). The Proton donor role is filled by histidine 88. Phenylalanine 113 serves as a coordination point for 5-amino-6-(D-ribitylamino)uracil. Arginine 127 contributes to the (2S)-2-hydroxy-3-oxobutyl phosphate binding site.

Belongs to the DMRL synthase family.

It carries out the reaction (2S)-2-hydroxy-3-oxobutyl phosphate + 5-amino-6-(D-ribitylamino)uracil = 6,7-dimethyl-8-(1-D-ribityl)lumazine + phosphate + 2 H2O + H(+). The protein operates within cofactor biosynthesis; riboflavin biosynthesis; riboflavin from 2-hydroxy-3-oxobutyl phosphate and 5-amino-6-(D-ribitylamino)uracil: step 1/2. Catalyzes the formation of 6,7-dimethyl-8-ribityllumazine by condensation of 5-amino-6-(D-ribitylamino)uracil with 3,4-dihydroxy-2-butanone 4-phosphate. This is the penultimate step in the biosynthesis of riboflavin. The polypeptide is 6,7-dimethyl-8-ribityllumazine synthase (Thermoanaerobacter sp. (strain X514)).